The primary structure comprises 197 residues: Large ribosomal subunit protein bL25 (197 aa).

This sequence belongs to the bacterial ribosomal protein bL25 family. CTC subfamily. In terms of assembly, part of the 50S ribosomal subunit; part of the 5S rRNA/L5/L18/L25 subcomplex. Contacts the 5S rRNA. Binds to the 5S rRNA independently of L5 and L18.

This is one of the proteins that binds to the 5S RNA in the ribosome where it forms part of the central protuberance. In Citrifermentans bemidjiense (strain ATCC BAA-1014 / DSM 16622 / JCM 12645 / Bem) (Geobacter bemidjiensis), this protein is Large ribosomal subunit protein bL25.